The following is a 253-amino-acid chain: Ribosomal RNA small subunit methyltransferase A (253 aa).

Positions 12, 14, 39, 60, 81, and 104 each coordinate S-adenosyl-L-methionine.

This sequence belongs to the class I-like SAM-binding methyltransferase superfamily. rRNA adenine N(6)-methyltransferase family. RsmA subfamily.

The protein resides in the cytoplasm. It carries out the reaction adenosine(1518)/adenosine(1519) in 16S rRNA + 4 S-adenosyl-L-methionine = N(6)-dimethyladenosine(1518)/N(6)-dimethyladenosine(1519) in 16S rRNA + 4 S-adenosyl-L-homocysteine + 4 H(+). In terms of biological role, specifically dimethylates two adjacent adenosines (A1518 and A1519) in the loop of a conserved hairpin near the 3'-end of 16S rRNA in the 30S particle. May play a critical role in biogenesis of 30S subunits. This chain is Ribosomal RNA small subunit methyltransferase A, found in Paracidovorax citrulli (strain AAC00-1) (Acidovorax citrulli).